Consider the following 133-residue polypeptide: Holo-[acyl-carrier-protein] synthase (133 aa).

Residues D8 and E57 each coordinate Mg(2+).

It belongs to the P-Pant transferase superfamily. AcpS family. Mg(2+) serves as cofactor.

Its subcellular location is the cytoplasm. The catalysed reaction is apo-[ACP] + CoA = holo-[ACP] + adenosine 3',5'-bisphosphate + H(+). Transfers the 4'-phosphopantetheine moiety from coenzyme A to a Ser of acyl-carrier-protein. In Caulobacter sp. (strain K31), this protein is Holo-[acyl-carrier-protein] synthase.